Consider the following 349-residue polypeptide: UDP-N-acetylenolpyruvoylglucosamine reductase (349 aa).

The FAD-binding PCMH-type domain maps to 24-197; the sequence is FGIAATARFA…VSVTFRLPKQ (174 aa). Arg-173 is a catalytic residue. Ser-249 acts as the Proton donor in catalysis. Glu-345 is an active-site residue.

Belongs to the MurB family. FAD serves as cofactor.

The protein localises to the cytoplasm. It catalyses the reaction UDP-N-acetyl-alpha-D-muramate + NADP(+) = UDP-N-acetyl-3-O-(1-carboxyvinyl)-alpha-D-glucosamine + NADPH + H(+). It functions in the pathway cell wall biogenesis; peptidoglycan biosynthesis. Functionally, cell wall formation. This is UDP-N-acetylenolpyruvoylglucosamine reductase from Burkholderia lata (strain ATCC 17760 / DSM 23089 / LMG 22485 / NCIMB 9086 / R18194 / 383).